We begin with the raw amino-acid sequence, 261 residues long: Indole-3-glycerol phosphate synthase (261 aa).

The protein belongs to the TrpC family.

The enzyme catalyses 1-(2-carboxyphenylamino)-1-deoxy-D-ribulose 5-phosphate + H(+) = (1S,2R)-1-C-(indol-3-yl)glycerol 3-phosphate + CO2 + H2O. It participates in amino-acid biosynthesis; L-tryptophan biosynthesis; L-tryptophan from chorismate: step 4/5. In Burkholderia mallei (strain NCTC 10247), this protein is Indole-3-glycerol phosphate synthase.